Consider the following 423-residue polypeptide: Inactive autotransporter heptosyltransferase BimC (423 aa).

Residues 1–10 (MPKVTFSGSA) are compositionally biased toward polar residues. The disordered stretch occupies residues 1-49 (MPKVTFSGSAPTLGVHAPPALDPRQPASPPPAASNGTHARGFSPPADMP). Positions 371, 374, 390, and 402 each coordinate Fe(3+).

It belongs to the glycosyltransferase 9 family. As to quaternary structure, homotrimer or homotetramer. Fe(3+) is required as a cofactor.

Its subcellular location is the cell inner membrane. It is found in the cytoplasm. Its function is as follows. Iron-binding protein which is required for the asymmetric polar distribution of the autotransporter BimA on the bacterial surface prior to its translocation into bacterial periplasm. Lacks heptosyltransferase activity. The chain is Inactive autotransporter heptosyltransferase BimC from Burkholderia thailandensis (strain ATCC 700388 / DSM 13276 / CCUG 48851 / CIP 106301 / E264).